Here is a 270-residue protein sequence, read N- to C-terminus: tRNA pseudouridine synthase A (270 aa).

Residue Asp-51 is the Nucleophile of the active site. Tyr-109 provides a ligand contact to substrate.

This sequence belongs to the tRNA pseudouridine synthase TruA family. As to quaternary structure, homodimer.

It carries out the reaction uridine(38/39/40) in tRNA = pseudouridine(38/39/40) in tRNA. Functionally, formation of pseudouridine at positions 38, 39 and 40 in the anticodon stem and loop of transfer RNAs. In Burkholderia orbicola (strain MC0-3), this protein is tRNA pseudouridine synthase A.